The primary structure comprises 427 residues: Peptidase B (427 aa).

Residues K195 and D200 each coordinate Mn(2+). K207 is a catalytic residue. 3 residues coordinate Mn(2+): D218, D277, and E279. The active site involves R281.

This sequence belongs to the peptidase M17 family. As to quaternary structure, homohexamer. It depends on Mn(2+) as a cofactor.

The protein resides in the cytoplasm. It catalyses the reaction Release of an N-terminal amino acid, Xaa, from a peptide or arylamide. Xaa is preferably Glu or Asp but may be other amino acids, including Leu, Met, His, Cys and Gln.. Its function is as follows. Probably plays an important role in intracellular peptide degradation. This chain is Peptidase B, found in Shigella flexneri serotype 5b (strain 8401).